A 101-amino-acid chain; its full sequence is Urease subunit beta (101 aa).

The protein belongs to the urease beta subunit family. Heterotrimer of UreA (gamma), UreB (beta) and UreC (alpha) subunits. Three heterotrimers associate to form the active enzyme.

The protein resides in the cytoplasm. It carries out the reaction urea + 2 H2O + H(+) = hydrogencarbonate + 2 NH4(+). Its pathway is nitrogen metabolism; urea degradation; CO(2) and NH(3) from urea (urease route): step 1/1. This Leptothrix cholodnii (strain ATCC 51168 / LMG 8142 / SP-6) (Leptothrix discophora (strain SP-6)) protein is Urease subunit beta.